A 274-amino-acid chain; its full sequence is Glutamate--cysteine ligase regulatory subunit (274 aa).

Residue Ser59 is modified to Phosphoserine. The residue at position 263 (Lys263) is an N6-acetyllysine.

Belongs to the aldo/keto reductase family. Glutamate--cysteine ligase light chain subfamily. Heterodimer of a catalytic heavy chain and a regulatory light chain.

It participates in sulfur metabolism; glutathione biosynthesis; glutathione from L-cysteine and L-glutamate: step 1/2. In Bos taurus (Bovine), this protein is Glutamate--cysteine ligase regulatory subunit (GCLM).